Consider the following 215-residue polypeptide: LexA repressor (215 aa).

The segment at residues V29–Q49 is a DNA-binding region (H-T-H motif). Active-site for autocatalytic cleavage activity residues include S138 and K175.

It belongs to the peptidase S24 family. As to quaternary structure, homodimer.

The catalysed reaction is Hydrolysis of Ala-|-Gly bond in repressor LexA.. Functionally, represses a number of genes involved in the response to DNA damage (SOS response), including recA and lexA. In the presence of single-stranded DNA, RecA interacts with LexA causing an autocatalytic cleavage which disrupts the DNA-binding part of LexA, leading to derepression of the SOS regulon and eventually DNA repair. This chain is LexA repressor, found in Ruminiclostridium cellulolyticum (strain ATCC 35319 / DSM 5812 / JCM 6584 / H10) (Clostridium cellulolyticum).